The primary structure comprises 373 residues: Queuine tRNA-ribosyltransferase (373 aa).

Residue D93 is the Proton acceptor of the active site. Substrate contacts are provided by residues 93-97 (DSGGF), D147, Q191, and G218. Residues 249-255 (GVGAPRD) are RNA binding. Residue D268 is the Nucleophile of the active site. The interval 273 to 277 (TRNAR) is RNA binding; important for wobble base 34 recognition. Zn(2+) is bound by residues C306, C308, C311, and H337.

It belongs to the queuine tRNA-ribosyltransferase family. Homodimer. Within each dimer, one monomer is responsible for RNA recognition and catalysis, while the other monomer binds to the replacement base PreQ1. Zn(2+) is required as a cofactor.

It catalyses the reaction 7-aminomethyl-7-carbaguanine + guanosine(34) in tRNA = 7-aminomethyl-7-carbaguanosine(34) in tRNA + guanine. The protein operates within tRNA modification; tRNA-queuosine biosynthesis. Its function is as follows. Catalyzes the base-exchange of a guanine (G) residue with the queuine precursor 7-aminomethyl-7-deazaguanine (PreQ1) at position 34 (anticodon wobble position) in tRNAs with GU(N) anticodons (tRNA-Asp, -Asn, -His and -Tyr). Catalysis occurs through a double-displacement mechanism. The nucleophile active site attacks the C1' of nucleotide 34 to detach the guanine base from the RNA, forming a covalent enzyme-RNA intermediate. The proton acceptor active site deprotonates the incoming PreQ1, allowing a nucleophilic attack on the C1' of the ribose to form the product. After dissociation, two additional enzymatic reactions on the tRNA convert PreQ1 to queuine (Q), resulting in the hypermodified nucleoside queuosine (7-(((4,5-cis-dihydroxy-2-cyclopenten-1-yl)amino)methyl)-7-deazaguanosine). This chain is Queuine tRNA-ribosyltransferase, found in Solidesulfovibrio magneticus (strain ATCC 700980 / DSM 13731 / RS-1) (Desulfovibrio magneticus).